A 468-amino-acid chain; its full sequence is Glutamate--tRNA ligase (468 aa).

The short motif at 11–21 (PSPTGFIHLGN) is the 'HIGH' region element. The 'KMSKS' region signature appears at 243-247 (KMSKR). Residue Lys-246 coordinates ATP.

The protein belongs to the class-I aminoacyl-tRNA synthetase family. Glutamate--tRNA ligase type 1 subfamily. In terms of assembly, monomer.

The protein localises to the cytoplasm. The catalysed reaction is tRNA(Glu) + L-glutamate + ATP = L-glutamyl-tRNA(Glu) + AMP + diphosphate. Functionally, catalyzes the attachment of glutamate to tRNA(Glu) in a two-step reaction: glutamate is first activated by ATP to form Glu-AMP and then transferred to the acceptor end of tRNA(Glu). This is Glutamate--tRNA ligase from Delftia acidovorans (strain DSM 14801 / SPH-1).